The following is a 120-amino-acid chain: Ribosome-binding factor A (120 aa).

It belongs to the RbfA family. As to quaternary structure, monomer. Binds 30S ribosomal subunits, but not 50S ribosomal subunits or 70S ribosomes.

Its subcellular location is the cytoplasm. Functionally, one of several proteins that assist in the late maturation steps of the functional core of the 30S ribosomal subunit. Associates with free 30S ribosomal subunits (but not with 30S subunits that are part of 70S ribosomes or polysomes). Required for efficient processing of 16S rRNA. May interact with the 5'-terminal helix region of 16S rRNA. This chain is Ribosome-binding factor A, found in Clostridium botulinum (strain Okra / Type B1).